A 166-amino-acid chain; its full sequence is MSGKIGLYTGSFDPVTNGHMDMIKRASHLFEHVYVGIFNNPNKQGFFTFELRAQMLREAVCALPNVTVVSAEHGLAVDLARELSVTHLIRGLRNTADFDYEAGLEYFNHRLAPEIETIYLMATHDLQPISSSRIRELIAFRAPITGLVPQAVINQVEKMNENNKKI.

S11 contributes to the substrate binding site. Residues 11-12 (SF) and H19 contribute to the ATP site. Substrate-binding residues include K43, A76, and R90. ATP-binding positions include 91 to 93 (GLR), E101, and 126 to 132 (LQPISSS).

It belongs to the bacterial CoaD family. As to quaternary structure, homohexamer. The cofactor is Mg(2+).

The protein resides in the cytoplasm. The enzyme catalyses (R)-4'-phosphopantetheine + ATP + H(+) = 3'-dephospho-CoA + diphosphate. The protein operates within cofactor biosynthesis; coenzyme A biosynthesis; CoA from (R)-pantothenate: step 4/5. In terms of biological role, reversibly transfers an adenylyl group from ATP to 4'-phosphopantetheine, yielding dephospho-CoA (dPCoA) and pyrophosphate. This Streptococcus equi subsp. zooepidemicus (strain H70) protein is Phosphopantetheine adenylyltransferase.